Reading from the N-terminus, the 512-residue chain is ATP synthase subunit alpha (512 aa).

169–176 (GDRQTGKT) is a binding site for ATP.

The protein belongs to the ATPase alpha/beta chains family. In terms of assembly, F-type ATPases have 2 components, CF(1) - the catalytic core - and CF(0) - the membrane proton channel. CF(1) has five subunits: alpha(3), beta(3), gamma(1), delta(1), epsilon(1). CF(0) has three main subunits: a(1), b(2) and c(9-12). The alpha and beta chains form an alternating ring which encloses part of the gamma chain. CF(1) is attached to CF(0) by a central stalk formed by the gamma and epsilon chains, while a peripheral stalk is formed by the delta and b chains.

It localises to the cell inner membrane. The enzyme catalyses ATP + H2O + 4 H(+)(in) = ADP + phosphate + 5 H(+)(out). Its function is as follows. Produces ATP from ADP in the presence of a proton gradient across the membrane. The alpha chain is a regulatory subunit. The sequence is that of ATP synthase subunit alpha from Azoarcus sp. (strain BH72).